The sequence spans 452 residues: tRNA modification GTPase MnmE (452 aa).

Positions 22, 80, and 119 each coordinate (6S)-5-formyl-5,6,7,8-tetrahydrofolate. The region spanning 213–375 (GVRTVIVGKP…LENKIYEKFF (163 aa)) is the TrmE-type G domain. Position 223 (asparagine 223) interacts with K(+). GTP contacts are provided by residues 223-228 (NSGKST), 242-248 (TDIPGTT), and 267-270 (DTAG). Residue serine 227 coordinates Mg(2+). Residues threonine 242, isoleucine 244, and threonine 247 each contribute to the K(+) site. Threonine 248 is a Mg(2+) binding site. Lysine 452 is a (6S)-5-formyl-5,6,7,8-tetrahydrofolate binding site.

Belongs to the TRAFAC class TrmE-Era-EngA-EngB-Septin-like GTPase superfamily. TrmE GTPase family. Homodimer. Heterotetramer of two MnmE and two MnmG subunits. Requires K(+) as cofactor.

The protein resides in the cytoplasm. In terms of biological role, exhibits a very high intrinsic GTPase hydrolysis rate. Involved in the addition of a carboxymethylaminomethyl (cmnm) group at the wobble position (U34) of certain tRNAs, forming tRNA-cmnm(5)s(2)U34. This chain is tRNA modification GTPase MnmE, found in Petrotoga mobilis (strain DSM 10674 / SJ95).